We begin with the raw amino-acid sequence, 358 residues long: Putative zinc metalloprotease BH06270 (358 aa).

Residue His-7 coordinates Zn(2+). Glu-8 is an active-site residue. His-11 contributes to the Zn(2+) binding site. 3 consecutive transmembrane segments (helical) span residues 89–111 (ATVF…FFFF), 282–304 (FLSL…LFPI), and 332–354 (IIFR…NDYF). The 76-residue stretch at 102 to 177 (TVVILTFFFF…IEFKMERSGQ (76 aa)) folds into the PDZ domain.

This sequence belongs to the peptidase M50B family. Zn(2+) serves as cofactor.

It is found in the cell inner membrane. This is Putative zinc metalloprotease BH06270 from Bartonella henselae (strain ATCC 49882 / DSM 28221 / CCUG 30454 / Houston 1) (Rochalimaea henselae).